The sequence spans 306 residues: Ribosomal protein L11 methyltransferase (306 aa).

S-adenosyl-L-methionine contacts are provided by T154, G179, D201, and N242.

This sequence belongs to the methyltransferase superfamily. PrmA family.

It is found in the cytoplasm. The catalysed reaction is L-lysyl-[protein] + 3 S-adenosyl-L-methionine = N(6),N(6),N(6)-trimethyl-L-lysyl-[protein] + 3 S-adenosyl-L-homocysteine + 3 H(+). Its function is as follows. Methylates ribosomal protein L11. This Xanthomonas campestris pv. campestris (strain 8004) protein is Ribosomal protein L11 methyltransferase.